The primary structure comprises 59 residues: Large ribosomal subunit protein uL30 (59 aa).

It belongs to the universal ribosomal protein uL30 family. Part of the 50S ribosomal subunit.

In Solibacter usitatus (strain Ellin6076), this protein is Large ribosomal subunit protein uL30.